Here is a 413-residue protein sequence, read N- to C-terminus: MKYEKLLPRFLEYVKVNTRSDENSTTTPSTQALVEFAHKMGEDMKALGLKDVHYLESNGYVIGTIPANTDKKVRKIGLLAHLDTADFNAEGVNPQILENYDGESVIKLGDTEFTLDPKDFPSLKNYKGQTLVHTDGTTLLGSDDKSGVAEIMTLAEYLLNINPDFEHGEIRVGFGPDEEIGVGADKFDVADFDVDFAYTVDGGPLGELQYETFSAAGAVIEFQGKNVHPGTAKNTMVNALQLAIDYHNALPEFDRPEKTEGREGFFHLLKLDGTPEEARAQYIIRDHEEGKFNERKALMQEIADKMNAEFGQNRVKPVIKDQYYNMAQIIEKDMSIIDIAKKAMENLDIVPIIEPIRGGTDGSKISFMGLPTPNLFAGGENMHGRFEFVSVQTMEKAVDTLLEIIRLNNEVVK.

Residue H81 participates in Zn(2+) binding. Residue D83 is part of the active site. Residue D143 participates in Zn(2+) binding. Catalysis depends on E178, which acts as the Proton acceptor. The Zn(2+) site is built by E179, D201, and H383.

The protein belongs to the peptidase M20B family. Zn(2+) is required as a cofactor.

It localises to the cytoplasm. The enzyme catalyses Release of the N-terminal residue from a tripeptide.. Functionally, cleaves the N-terminal amino acid of tripeptides. This chain is Peptidase T, found in Lactococcus lactis subsp. hordniae.